The following is a 186-amino-acid chain: ADP compounds hydrolase NudE (186 aa).

Residue E40 coordinates substrate. One can recognise a Nudix hydrolase domain in the interval 45–172 (TNREAVMIVP…DFNEARNVSA (128 aa)). A Nudix box motif is present at residues 80 to 101 (GLIDPGESVYEAANRELKEEVG). The a divalent metal cation site is built by E95 and E99. Residue S118 participates in substrate binding.

Belongs to the Nudix hydrolase family. In terms of assembly, homodimer. Mg(2+) serves as cofactor.

It carries out the reaction ADP-D-ribose + H2O = D-ribose 5-phosphate + AMP + 2 H(+). In terms of biological role, active on adenosine(5')triphospho(5')adenosine (Ap3A), ADP-ribose, NADH, adenosine(5')diphospho(5')adenosine (Ap2A). In Escherichia coli (strain K12), this protein is ADP compounds hydrolase NudE (nudE).